The chain runs to 334 residues: Malate dehydrogenase 2 (334 aa).

19 to 25 (IGAGKVG) contacts NAD(+). Residues Arg100 and Arg106 each coordinate substrate. Residues Asn113 and 136 to 138 (VSN) each bind NAD(+). Residues Asn138 and Arg169 each coordinate substrate. Catalysis depends on His193, which acts as the Proton acceptor.

The protein belongs to the LDH/MDH superfamily.

The catalysed reaction is (S)-malate + NAD(+) = oxaloacetate + NADH + H(+). Its function is as follows. Catalyzes the reversible oxidation of malate to oxaloacetate. In Aquifex aeolicus (strain VF5), this protein is Malate dehydrogenase 2.